The sequence spans 416 residues: Serine hydroxymethyltransferase (416 aa).

(6S)-5,6,7,8-tetrahydrofolate-binding positions include Leu-118 and Gly-122–Leu-124. An N6-(pyridoxal phosphate)lysine modification is found at Lys-226. Residues Glu-242 and Ser-350–Phe-352 contribute to the (6S)-5,6,7,8-tetrahydrofolate site.

Belongs to the SHMT family. In terms of assembly, homodimer. Pyridoxal 5'-phosphate is required as a cofactor.

Its subcellular location is the cytoplasm. The catalysed reaction is (6R)-5,10-methylene-5,6,7,8-tetrahydrofolate + glycine + H2O = (6S)-5,6,7,8-tetrahydrofolate + L-serine. Its pathway is one-carbon metabolism; tetrahydrofolate interconversion. It participates in amino-acid biosynthesis; glycine biosynthesis; glycine from L-serine: step 1/1. In terms of biological role, catalyzes the reversible interconversion of serine and glycine with tetrahydrofolate (THF) serving as the one-carbon carrier. This reaction serves as the major source of one-carbon groups required for the biosynthesis of purines, thymidylate, methionine, and other important biomolecules. Also exhibits THF-independent aldolase activity toward beta-hydroxyamino acids, producing glycine and aldehydes, via a retro-aldol mechanism. This Wolinella succinogenes (strain ATCC 29543 / DSM 1740 / CCUG 13145 / JCM 31913 / LMG 7466 / NCTC 11488 / FDC 602W) (Vibrio succinogenes) protein is Serine hydroxymethyltransferase.